Here is a 196-residue protein sequence, read N- to C-terminus: Adenine phosphoribosyltransferase (196 aa).

Belongs to the purine/pyrimidine phosphoribosyltransferase family. As to quaternary structure, homodimer.

The protein resides in the cytoplasm. The enzyme catalyses AMP + diphosphate = 5-phospho-alpha-D-ribose 1-diphosphate + adenine. Its pathway is purine metabolism; AMP biosynthesis via salvage pathway; AMP from adenine: step 1/1. Its function is as follows. Catalyzes a salvage reaction resulting in the formation of AMP, that is energically less costly than de novo synthesis. This is Adenine phosphoribosyltransferase from Methylibium petroleiphilum (strain ATCC BAA-1232 / LMG 22953 / PM1).